Reading from the N-terminus, the 256-residue chain is Protein YIPF5 (256 aa).

Topologically, residues 1–125 (MSNFDNFNTD…ADGNIMNETD (125 aa)) are cytoplasmic. Residues 126 to 146 (LAGPMVFCLAFGATLLLAGKI) form a helical membrane-spanning segment. Position 147 (Q147) is a topological domain, lumenal. A helical transmembrane segment spans residues 148–168 (FGYVYGISAIGCLGMYCLLNL). Topologically, residues 169–172 (MSMT) are cytoplasmic. Residues 173–193 (GVSFGCVSSVLGYCLLPMIIL) traverse the membrane as a helical segment. Topologically, residues 194–195 (SS) are lumenal. Residues 196 to 216 (FAVIFSLQGILGIVLAALIIG) traverse the membrane as a helical segment. Residues 217-235 (WCSFSASKIFISALAMDGQ) lie on the Cytoplasmic side of the membrane. Residues 236 to 256 (QVLVAYPCALLYGVFALISVF) form a helical membrane-spanning segment.

It belongs to the YIP1 family.

It is found in the endoplasmic reticulum membrane. The protein localises to the golgi apparatus. The protein resides in the cis-Golgi network membrane. In terms of biological role, plays a role in transport between endoplasmic reticulum and Golgi. This chain is Protein YIPF5 (yipf5), found in Xenopus tropicalis (Western clawed frog).